The chain runs to 804 residues: Exocyst complex component 6 (804 aa).

It belongs to the SEC15 family. As to quaternary structure, the exocyst complex is composed of EXOC1, EXOC2, EXOC3, EXOC4, EXOC5, EXOC6, EXOC7 and EXOC8. Interacts with CNTRL. Interacts with RAB11A in a GTP-dependent manner.

The protein localises to the cytoplasm. Its subcellular location is the perinuclear region. It is found in the cell projection. It localises to the growth cone. The protein resides in the midbody. The protein localises to the midbody ring. In terms of biological role, component of the exocyst complex involved in the docking of exocytic vesicles with fusion sites on the plasma membrane. Together with RAB11A, RAB3IP, RAB8A, PARD3, PRKCI, ANXA2, CDC42 and DNMBP promotes transcytosis of PODXL to the apical membrane initiation sites (AMIS), apical surface formation and lumenogenesis. This chain is Exocyst complex component 6 (Exoc6), found in Rattus norvegicus (Rat).